The following is a 158-amino-acid chain: 6,7-dimethyl-8-ribityllumazine synthase (158 aa).

5-amino-6-(D-ribitylamino)uracil-binding positions include W27, 58–60 (SFE), and 81–83 (VII). 86 to 87 (GT) is a (2S)-2-hydroxy-3-oxobutyl phosphate binding site. H89 (proton donor) is an active-site residue. F114 contributes to the 5-amino-6-(D-ribitylamino)uracil binding site. R128 serves as a coordination point for (2S)-2-hydroxy-3-oxobutyl phosphate.

This sequence belongs to the DMRL synthase family.

The enzyme catalyses (2S)-2-hydroxy-3-oxobutyl phosphate + 5-amino-6-(D-ribitylamino)uracil = 6,7-dimethyl-8-(1-D-ribityl)lumazine + phosphate + 2 H2O + H(+). The protein operates within cofactor biosynthesis; riboflavin biosynthesis; riboflavin from 2-hydroxy-3-oxobutyl phosphate and 5-amino-6-(D-ribitylamino)uracil: step 1/2. Functionally, catalyzes the formation of 6,7-dimethyl-8-ribityllumazine by condensation of 5-amino-6-(D-ribitylamino)uracil with 3,4-dihydroxy-2-butanone 4-phosphate. This is the penultimate step in the biosynthesis of riboflavin. The protein is 6,7-dimethyl-8-ribityllumazine synthase of Leifsonia xyli subsp. xyli (strain CTCB07).